Reading from the N-terminus, the 1111-residue chain is Protein NETWORKED 1C (1111 aa).

The 81-residue stretch at 13 to 93 (YSWWWDSHNT…ERYNHATGVI (81 aa)) folds into the NAB domain. Coiled-coil stretches lie at residues 202-287 (SESE…KESS), 314-605 (ERAS…LISE), and 642-752 (KTIG…LESK). The tract at residues 850-870 (TGGGRSMRKQDGGSGRMRKQS) is disordered. Positions 943 to 1009 (NREVNKRRVL…EGEEAIEKLF (67 aa)) form a coiled coil.

It belongs to the NET family.

Functionally, plant-specific actin binding protein. May be part of a membrane-cytoskeletal adapter complex. This is Protein NETWORKED 1C from Arabidopsis thaliana (Mouse-ear cress).